The following is a 326-amino-acid chain: MVFYTIGPQTPQIDKGQIYGIIGYSGAGKSTLIRLLNGLEKPGSGSVTIAGQDIAQASVEALRQARLKISMVFQHFNLLWSRTVSENIAFSLQISGTSKSVIQDRVQELIALVGLVGKEQAYPSQLSGGQKQRVGIARALANNPNVLLCDEATSALDPQTTDAILELLLDINRKLWLTIVLITHEMHVVRKICHRVAVMEEGRIVEEGEVLSLFTHPQQPITRQFVKQTSGYISANVPFNPQLVNIDNGKVLKLTFVGQSTQQPVIGELTLKYGLAFNMLHGIMTQTTNGTFGEIWLQVPASQSQLPRILADLHAYEISTEVVTNV.

An ABC transporter domain is found at 1-226 (MVFYTIGPQT…PQQPITRQFV (226 aa)). ATP is bound at residue 23-30 (GYSGAGKS).

Belongs to the ABC transporter superfamily. Methionine importer (TC 3.A.1.24) family. The complex is composed of two ATP-binding proteins (MetN), two transmembrane proteins (MetI) and a solute-binding protein (MetQ).

It localises to the cell inner membrane. The catalysed reaction is L-methionine(out) + ATP + H2O = L-methionine(in) + ADP + phosphate + H(+). It catalyses the reaction D-methionine(out) + ATP + H2O = D-methionine(in) + ADP + phosphate + H(+). Part of the ABC transporter complex MetNIQ involved in methionine import. Responsible for energy coupling to the transport system. In Erwinia pyrifoliae (strain DSM 12162 / Ep1/96), this protein is Methionine import ATP-binding protein MetN.